The sequence spans 204 residues: Ribonuclease HII (204 aa).

The 188-residue stretch at 17–204 (QLVAGVDEVG…KPVQQLLQGD (188 aa)) folds into the RNase H type-2 domain. A divalent metal cation contacts are provided by D23, E24, and D115.

Belongs to the RNase HII family. The cofactor is Mn(2+). Requires Mg(2+) as cofactor.

Its subcellular location is the cytoplasm. It carries out the reaction Endonucleolytic cleavage to 5'-phosphomonoester.. Endonuclease that specifically degrades the RNA of RNA-DNA hybrids. The chain is Ribonuclease HII from Hahella chejuensis (strain KCTC 2396).